Here is a 132-residue protein sequence, read N- to C-terminus: UPF0060 membrane protein SG1469 (132 aa).

The next 3 helical transmembrane spans lie at 5–25, 32–52, and 60–80; these read VLLY…PYCY, LLLI…VLYP, and AAYG…IDGI.

Belongs to the UPF0060 family.

It is found in the cell inner membrane. This is UPF0060 membrane protein SG1469 from Sodalis glossinidius (strain morsitans).